The following is a 178-amino-acid chain: Cysteine protease inhibitor 7 (178 aa).

Disulfide bonds link Cys41/Cys93 and Cys141/Cys147.

Belongs to the protease inhibitor I3 (leguminous Kunitz-type inhibitor) family.

It localises to the vacuole. Inhibitor of cysteine proteases. May protect the plant by inhibiting proteases of invading organisms. The polypeptide is Cysteine protease inhibitor 7 (Solanum tuberosum (Potato)).